Consider the following 748-residue polypeptide: Disintegrin and metalloproteinase domain-containing protein 10 (748 aa).

A signal peptide spans 1-19; it reads MVLLRVLILLLSWVAGLGG. A propeptide spanning residues 20 to 213 is cleaved from the precursor; the sequence is QYGNPLNKYI…NGPELLRKKR (194 aa). The Extracellular portion of the chain corresponds to 20 to 672; the sequence is QYGNPLNKYI…SPELYENIAE (653 aa). The short motif at 171-178 is the Cysteine switch element; that stretch reads GGCADHSV. Cys173 is a Zn(2+) binding site. The region spanning 220-456 is the Peptidase M12B domain; the sequence is NTCQLYIQTD…KRNNCFVESG (237 aa). Residues Asn267 and Asn278 are each glycosylated (N-linked (GlcNAc...) asparagine). 16 cysteine pairs are disulfide-bonded: Cys344–Cys451, Cys399–Cys435, Cys460–Cys495, Cys471–Cys484, Cys473–Cys479, Cys483–Cys515, Cys503–Cys511, Cys510–Cys536, Cys524–Cys543, Cys530–Cys562, Cys555–Cys567, Cys572–Cys598, Cys580–Cys607, Cys582–Cys597, Cys594–Cys639, and Cys632–Cys645. Position 383 (His383) interacts with Zn(2+). Residue Glu384 is part of the active site. Zn(2+)-binding residues include His387 and His393. Asn439 carries N-linked (GlcNAc...) asparagine glycosylation. Residues 457-551 enclose the Disintegrin domain; it reads QPICGNGMVE…LCPASDPKPN (95 aa). A glycan (N-linked (GlcNAc...) asparagine) is linked at Asn551. The helical transmembrane segment at 673–696 threads the bilayer; that stretch reads WIVAYWWAVLLMGIALIMLMAGFI. The Cytoplasmic portion of the chain corresponds to 697–748; sequence KICSVHTPSSNPKLPPPKPLPGTLKRRRPPQPIQQPQRQRPRESYQMGHMRR. The segment at 704 to 748 is disordered; sequence PSSNPKLPPPKPLPGTLKRRRPPQPIQQPQRQRPRESYQMGHMRR. The short motif at 708–715 is the SH3-binding element; sequence PKLPPPKP. Phosphothreonine is present on Thr719. The SH3-binding motif lies at 722-728; it reads RRRPPQP. The interaction with AP2A1, AP2A2 and AP2M1 stretch occupies residues 734–748; that stretch reads RQRPRESYQMGHMRR.

As to quaternary structure, forms a ternary EFNA5-EPHA3-ADAM10 complex mediating EFNA5 extracellular domain shedding by ADAM10 which regulates the EFNA5-EPHA3 complex internalization and function, the cleavage occurs in trans, with ADAM10 and its substrate being on the membranes of opposing cells. Interacts with the clathrin adapter AP2 complex subunits AP2A1, AP2A2, AP2B1, and AP2M1; this interaction facilitates ADAM10 endocytosis from the plasma membrane during long-term potentiation in hippocampal neurons. Forms a ternary complex composed of ADAM10, EPHA4 and CADH1; within the complex, ADAM10 cleaves CADH1 which disrupts adherens junctions. Interacts with EPHA2. Interacts with NGF in a divalent cation-dependent manner. Interacts with TSPAN14; the interaction promotes ADAM10 maturation and cell surface expression. Interacts with TSPAN5, TSPAN10, TSPAN14, TSPAN15, TSPAN17 and TSPAN33; these interactions regulate ADAM10 substrate specificity, endocytosis and turnover. Interacts (via extracellular domain) with TSPAN33 (via extracellular domain) and (via cytoplasmic domain) with AFDN; interaction with TSPAN33 allows the docking of ADAM10 to zonula adherens through a PDZ11-dependent interaction between TSPAN33 and PLEKHA7 while interaction with AFDN locks ADAM10 at zonula adherens. Interacts with DLG1; this interaction recruits ADAM10 to the cell membrane during long-term depression in hippocampal neurons. Interacts (via extracellular domain) with BACE1 (via extracellular domain). Interacts with FAM171A1. The cofactor is Zn(2+). In terms of processing, the precursor is cleaved by furin and PCSK7. Expressed at low level in kidney, spleen, lung, adrenal, heart and peripheral nerve.

It is found in the golgi apparatus membrane. It localises to the cell membrane. The protein resides in the cytoplasmic vesicle. The protein localises to the clathrin-coated vesicle. Its subcellular location is the cell projection. It is found in the axon. It localises to the dendrite. The protein resides in the cell junction. The protein localises to the adherens junction. Its subcellular location is the cytoplasm. It catalyses the reaction Endopeptidase of broad specificity.. Its activity is regulated as follows. Catalytically inactive when the propeptide is intact and associated with the mature enzyme. The disintegrin and cysteine-rich regions modulate access of substrates to exerts an inhibitory effect on the cleavage of ADAM10 substrates. Its function is as follows. Transmembrane metalloprotease which mediates the ectodomain shedding of a myriad of transmembrane proteins, including adhesion proteins, growth factor precursors and cytokines being essential for development and tissue homeostasis. Associates with six members of the tetraspanin superfamily TspanC8 which regulate its exit from the endoplasmic reticulum and its substrate selectivity. Cleaves the membrane-bound precursor of TNF-alpha at '76-Ala-|-Val-77' to its mature soluble form. Responsible for the proteolytical release of soluble JAM3 from endothelial cells surface. Responsible for the proteolytic release of several other cell-surface proteins, including heparin-binding epidermal growth-like factor, ephrin-A2, CD44, CDH2 and for constitutive and regulated alpha-secretase cleavage of amyloid precursor protein (APP). Contributes to the normal cleavage of the cellular prion protein. Involved in the cleavage of the adhesion molecule L1 at the cell surface and in released membrane vesicles, suggesting a vesicle-based protease activity. Also controls the proteolytic processing of Notch and mediates lateral inhibition during neurogenesis. Required for the development of type 1 transitional B cells into marginal zone B cells, probably by cleaving Notch. Responsible for the FasL ectodomain shedding and for the generation of the remnant ADAM10-processed FasL (FasL APL) transmembrane form. Also cleaves the ectodomain of the integral membrane proteins CORIN and ITM2B. Mediates the proteolytic cleavage of LAG3, leading to release the secreted form of LAG3. Mediates the proteolytic cleavage of IL6R and IL11RA, leading to the release of secreted forms of IL6R and IL11RA. Enhances the cleavage of CHL1 by BACE1. Cleaves NRCAM. Cleaves TREM2, resulting in shedding of the TREM2 ectodomain. Involved in the development and maturation of glomerular and coronary vasculature. During development of the cochlear organ of Corti, promotes pillar cell separation by forming a ternary complex with CADH1 and EPHA4 and cleaving CADH1 at adherens junctions. May regulate the EFNA5-EPHA3 signaling. Regulates leukocyte transmigration as a sheddase for the adherens junction protein VE-cadherin/CDH5 in endothelial cells. The protein is Disintegrin and metalloproteinase domain-containing protein 10 (ADAM10) of Bos taurus (Bovine).